The following is a 197-amino-acid chain: RILP-like protein 2 (197 aa).

In terms of domain architecture, RH1 spans 14-96 (EDEGALAKSP…KQEVEGLRRA (83 aa)). Residues 65 to 153 (LEALVNEGSL…VQEELQCYRS (89 aa)) are a coiled coil. In terms of domain architecture, RH2 spans 119–184 (RPRFTLQELR…GNGEKEERTI (66 aa)).

As to quaternary structure, homodimer. Interacts (via N-terminus) with MYO5A, the interaction is required for its role in dendrite formation. Interacts with RAC1. Interacts with RAB8A; interaction is dependent on the phosphorylation of RAB8A on 'Thr-72'. Interacts with RAB10 and RAB12; interaction is dependent on the phosphorylation of 'Thr-73' on RAB10 and 'Ser-105' on RAB12.

The protein localises to the cytoplasm. Its subcellular location is the cytosol. It is found in the cytoskeleton. The protein resides in the microtubule organizing center. It localises to the centrosome. The protein localises to the cell projection. Its subcellular location is the cilium. Involved in cell shape and neuronal morphogenesis, positively regulating the establishment and maintenance of dendritic spines. Plays a role in cellular protein transport, including protein transport away from primary cilia. May function via activation of RAC1 and PAK1. The protein is RILP-like protein 2 (Rilpl2) of Rattus norvegicus (Rat).